The chain runs to 144 residues: 3-hydroxyacyl-[acyl-carrier-protein] dehydratase FabZ (144 aa).

His-48 is an active-site residue.

It belongs to the thioester dehydratase family. FabZ subfamily.

The protein resides in the cytoplasm. It catalyses the reaction a (3R)-hydroxyacyl-[ACP] = a (2E)-enoyl-[ACP] + H2O. Its function is as follows. Involved in unsaturated fatty acids biosynthesis. Catalyzes the dehydration of short chain beta-hydroxyacyl-ACPs and long chain saturated and unsaturated beta-hydroxyacyl-ACPs. The polypeptide is 3-hydroxyacyl-[acyl-carrier-protein] dehydratase FabZ (Bacillus cereus (strain AH187)).